Here is a 138-residue protein sequence, read N- to C-terminus: Basic phospholipase A2 homolog Vur-S49 (138 aa).

A signal peptide spans 1 to 16; sequence MRALWIVAVCLIGVEG. Disulfide bonds link Cys42–Cys131, Cys44–Cys60, Cys59–Cys111, Cys65–Cys138, Cys66–Cys104, Cys73–Cys97, and Cys91–Cys102. The interval 121–133 is important for membrane-damaging activities in eukaryotes and bacteria; heparin-binding; it reads KKYKVYLRFKCKG.

This sequence belongs to the phospholipase A2 family. Group II subfamily. S49 sub-subfamily. In terms of tissue distribution, expressed by the venom gland.

Its subcellular location is the secreted. Functionally, snake venom phospholipase A2 homolog that lacks enzymatic activity. Is able to suppress the acetylcholine (ACh)-evoked current mediated by alpha-7 (CHRNA7)-similar nAChRs in L.stagnalis neurons (IC(50)=2.18 uM). This activity is only partially reversible and seems to be non-competitive. This is Basic phospholipase A2 homolog Vur-S49 from Vipera renardi (Steppe viper).